Reading from the N-terminus, the 143-residue chain is Nucleoside diphosphate kinase (143 aa).

ATP contacts are provided by lysine 11, phenylalanine 59, arginine 87, threonine 93, arginine 104, and asparagine 114. Catalysis depends on histidine 117, which acts as the Pros-phosphohistidine intermediate.

The protein belongs to the NDK family. As to quaternary structure, homotetramer. Mg(2+) serves as cofactor.

It localises to the cytoplasm. The enzyme catalyses a 2'-deoxyribonucleoside 5'-diphosphate + ATP = a 2'-deoxyribonucleoside 5'-triphosphate + ADP. It carries out the reaction a ribonucleoside 5'-diphosphate + ATP = a ribonucleoside 5'-triphosphate + ADP. Major role in the synthesis of nucleoside triphosphates other than ATP. The ATP gamma phosphate is transferred to the NDP beta phosphate via a ping-pong mechanism, using a phosphorylated active-site intermediate. The protein is Nucleoside diphosphate kinase of Colwellia psychrerythraea (strain 34H / ATCC BAA-681) (Vibrio psychroerythus).